The sequence spans 78 residues: ATP synthase subunit a (78 aa).

Residues 34 to 54 (LTNIGLYLTIGIFLILTYSLL) traverse the membrane as a helical segment.

The protein belongs to the ATPase A chain family. As to quaternary structure, F-type ATPases have 2 components, CF(1) - the catalytic core - and CF(0) - the membrane proton channel. CF(1) has five subunits: alpha(3), beta(3), gamma(1), delta(1), epsilon(1). CF(0) has three main subunits: a, b and c.

It is found in the mitochondrion inner membrane. Mitochondrial membrane ATP synthase (F(1)F(0) ATP synthase or Complex V) produces ATP from ADP in the presence of a proton gradient across the membrane which is generated by electron transport complexes of the respiratory chain. F-type ATPases consist of two structural domains, F(1) - containing the extramembraneous catalytic core and F(0) - containing the membrane proton channel, linked together by a central stalk and a peripheral stalk. During catalysis, ATP synthesis in the catalytic domain of F(1) is coupled via a rotary mechanism of the central stalk subunits to proton translocation. Key component of the proton channel; it may play a direct role in the translocation of protons across the membrane. The polypeptide is ATP synthase subunit a (atp6) (Aspergillus amstelodami).